A 1070-amino-acid chain; its full sequence is Duffy receptor (1070 aa).

The first 20 residues, 1–20 (MKGKNRSLFVLLVLLLLHKV), serve as a signal peptide directing secretion. Over 21-1007 (NNVLLERTIE…CFTKGGFKDK (987 aa)) the chain is Extracellular. A disordered region spans residues 116–146 (YMEGKDGGDKTGEEKDGEHKTDSKTDNGKGA). A compositionally biased stretch (basic and acidic residues) spans 118 to 142 (EGKDGGDKTGEEKDGEHKTDSKTDN). A glycan (N-linked (GlcNAc...) asparagine) is linked at asparagine 183. Residues 211–521 (NTVMKNCNYK…AKKNTQEVVT (311 aa)) form a pvRII region; mediates ACKR1 binding region. Cystine bridges form between cysteine 217–cysteine 246 and cysteine 230–cysteine 237. N-linked (GlcNAc...) asparagine glycosylation is found at asparagine 255, asparagine 351, and asparagine 420. Cystine bridges form between cysteine 300/cysteine 377, cysteine 415/cysteine 432, cysteine 427/cysteine 507, and cysteine 436/cysteine 505. Polar residues-rich tracts occupy residues 525–542 (NAAK…QPVD), 554–569 (THGN…TTGK), and 629–642 (GASN…TVEA). The tract at residues 525-906 (NAAKSQATNS…HLNSNNNLSN (382 aa)) is disordered. Over residues 697–711 (ETGKGQDNDMAKATK) the composition is skewed to basic and acidic residues. The span at 712–728 (DSSNSSDGTSSATGDTT) shows a compositional bias: low complexity. A glycan (N-linked (GlcNAc...) asparagine) is linked at asparagine 715. Basic and acidic residues predominate over residues 730-748 (AVDREINKGVPEDRDKTVG). Residue asparagine 787 is glycosylated (N-linked (GlcNAc...) asparagine). Residues 808–817 (LSKTESLEST) are compositionally biased toward low complexity. N-linked (GlcNAc...) asparagine glycosylation is present at asparagine 825. Composition is skewed to basic and acidic residues over residues 835 to 849 (NGGK…DFKS) and 865 to 889 (AEGH…KDTF). Residues 895 to 906 (SHHLNSNNNLSN) show a composition bias toward low complexity. 2 N-linked (GlcNAc...) asparagine glycosylation sites follow: asparagine 903 and asparagine 938. Residues 1008 to 1025 (TYFAAAGALLILLLLIAS) traverse the membrane as a helical segment. Over 1026-1070 (RKMIKNDSEEATFNEFEEYCDNIHRIPLMPNNIEHMQPSTPLDYS) the chain is Cytoplasmic.

In terms of assembly, homodimer; dimerization (via PvRII region) is promoted by the interaction with human ACKR1. Interacts (via PvRII region) with human ACKR1 (via N-terminal extracellular domain).

It localises to the membrane. Functionally, binds to the human erythrocyte Duffy blood group determinant (ACKR1). This Plasmodium vivax (strain Salvador I) protein is Duffy receptor (PVDR).